The following is a 188-amino-acid chain: Probable manganese efflux pump MntP (188 aa).

A run of 5 helical transmembrane segments spans residues Ile-3–Gly-23, Leu-66–Ile-86, Trp-106–Phe-128, Ala-143–Gly-163, and Ile-168–Gly-188.

This sequence belongs to the MntP (TC 9.B.29) family.

It localises to the cell inner membrane. In terms of biological role, probably functions as a manganese efflux pump. The protein is Probable manganese efflux pump MntP of Escherichia coli O139:H28 (strain E24377A / ETEC).